The primary structure comprises 364 residues: Tyrosine--tRNA ligase (364 aa).

L-tyrosine is bound at residue Tyr39. 2 residues coordinate ATP: His49 and Trp52. Positions 165, 169, 172, and 187 each coordinate L-tyrosine. The 'KMSKS' region signature appears at 238-242 (KMSKS). Lys241 is an ATP binding site.

Belongs to the class-I aminoacyl-tRNA synthetase family. TyrS type 4 subfamily. As to quaternary structure, homodimer.

The protein resides in the cytoplasm. It catalyses the reaction tRNA(Tyr) + L-tyrosine + ATP = L-tyrosyl-tRNA(Tyr) + AMP + diphosphate + H(+). Functionally, catalyzes the attachment of tyrosine to tRNA(Tyr) in a two-step reaction: tyrosine is first activated by ATP to form Tyr-AMP and then transferred to the acceptor end of tRNA(Tyr). In Aeropyrum pernix (strain ATCC 700893 / DSM 11879 / JCM 9820 / NBRC 100138 / K1), this protein is Tyrosine--tRNA ligase.